A 360-amino-acid chain; its full sequence is tRNA-specific 2-thiouridylase MnmA (360 aa).

ATP contacts are provided by residues 8-15 (GMSGGVDS) and Met-34. An interaction with target base in tRNA region spans residues 94 to 96 (NPD). The active-site Nucleophile is the Cys-99. A disulfide bond links Cys-99 and Cys-195. Gly-123 provides a ligand contact to ATP. Positions 145–147 (KDQ) are interaction with tRNA. The Cysteine persulfide intermediate role is filled by Cys-195. The interval 307-308 (RY) is interaction with tRNA.

This sequence belongs to the MnmA/TRMU family.

It localises to the cytoplasm. It catalyses the reaction S-sulfanyl-L-cysteinyl-[protein] + uridine(34) in tRNA + AH2 + ATP = 2-thiouridine(34) in tRNA + L-cysteinyl-[protein] + A + AMP + diphosphate + H(+). In terms of biological role, catalyzes the 2-thiolation of uridine at the wobble position (U34) of tRNA, leading to the formation of s(2)U34. The polypeptide is tRNA-specific 2-thiouridylase MnmA (Methylobacillus flagellatus (strain ATCC 51484 / DSM 6875 / VKM B-1610 / KT)).